Consider the following 483-residue polypeptide: Keratin, type II cytoskeletal 7 (483 aa).

Ser2 is modified (N-acetylserine). Phosphoserine occurs at positions 2, 6, and 7. Residues Ser2–Glu107 form a head region. Ser12 carries O-linked (GlcNAc) serine glycosylation. The segment at Ser14 to Ser37 is disordered. A Dimethylated arginine; alternate modification is found at Arg20. Arg20 bears the Omega-N-methylarginine; alternate mark. Over residues Arg25 to Ser37 the composition is skewed to low complexity. 2 positions are modified to phosphoserine: Ser63 and Ser88. Residues Glu107 to Leu143 are coil 1A. The IF rod domain maps to Glu108–Leu420. Thr114 is modified (phosphothreonine). A linker 1 region spans residues Gln144 to His161. Lys147 is covalently cross-linked (Glycyl lysine isopeptide (Lys-Gly) (interchain with G-Cter in SUMO2)). Residues Ile162–Leu253 are coil 1B. Lys196 carries the N6-acetyllysine modification. A linker 12 region spans residues Gln254–Ile277. Phosphoserine is present on residues Ser269 and Ser271. Residues Ile278–Glu416 form a coil 2 region. Glycyl lysine isopeptide (Lys-Gly) (interchain with G-Cter in SUMO2) cross-links involve residues Lys282 and Lys303. Thr306 bears the Phosphothreonine mark. Glycyl lysine isopeptide (Lys-Gly) (interchain with G-Cter in SUMO2) cross-links involve residues Lys313 and Lys348. The interval Glu417–Asn483 is tail.

The protein belongs to the intermediate filament family. In terms of assembly, heterotetramer of two type I and two type II keratins. Interacts with eukaryotic translation initiator factor 3 (eIF3) subunit EIF3S10. Interacts with GPER1. In terms of processing, arg-20 is dimethylated, probably to asymmetric dimethylarginine.

Functionally, blocks interferon-dependent interphase and stimulates DNA synthesis in cells. The polypeptide is Keratin, type II cytoskeletal 7 (Potorous tridactylus (Potoroo)).